Here is a 209-residue protein sequence, read N- to C-terminus: Uracil phosphoribosyltransferase (209 aa).

Residues Arg79, Arg104, and 131–139 (DPMLATGGS) contribute to the 5-phospho-alpha-D-ribose 1-diphosphate site. Uracil-binding positions include Ile194 and 199-201 (GDA). Position 200 (Asp200) interacts with 5-phospho-alpha-D-ribose 1-diphosphate.

The protein belongs to the UPRTase family. The cofactor is Mg(2+).

It catalyses the reaction UMP + diphosphate = 5-phospho-alpha-D-ribose 1-diphosphate + uracil. Its pathway is pyrimidine metabolism; UMP biosynthesis via salvage pathway; UMP from uracil: step 1/1. Allosterically activated by GTP. Catalyzes the conversion of uracil and 5-phospho-alpha-D-ribose 1-diphosphate (PRPP) to UMP and diphosphate. The chain is Uracil phosphoribosyltransferase from Listeria monocytogenes serovar 1/2a (strain ATCC BAA-679 / EGD-e).